The following is a 442-amino-acid chain: tRNA-2-methylthio-N(6)-dimethylallyladenosine synthase (442 aa).

The 118-residue stretch at 5-122 folds into the MTTase N-terminal domain; that stretch reads KRIFIKTFGC…LPDMIESKRR (118 aa). [4Fe-4S] cluster-binding residues include Cys14, Cys51, Cys85, Cys159, Cys163, and Cys166. Residues 145–377 enclose the Radical SAM core domain; it reads RVEGAAAFLS…QALNEAQGKA (233 aa). A TRAM domain is found at 380–442; that stretch reads ASMVGSIQRV…LSHTLRGELV (63 aa).

Belongs to the methylthiotransferase family. MiaB subfamily. As to quaternary structure, monomer. [4Fe-4S] cluster is required as a cofactor.

The protein localises to the cytoplasm. The catalysed reaction is N(6)-dimethylallyladenosine(37) in tRNA + (sulfur carrier)-SH + AH2 + 2 S-adenosyl-L-methionine = 2-methylsulfanyl-N(6)-dimethylallyladenosine(37) in tRNA + (sulfur carrier)-H + 5'-deoxyadenosine + L-methionine + A + S-adenosyl-L-homocysteine + 2 H(+). In terms of biological role, catalyzes the methylthiolation of N6-(dimethylallyl)adenosine (i(6)A), leading to the formation of 2-methylthio-N6-(dimethylallyl)adenosine (ms(2)i(6)A) at position 37 in tRNAs that read codons beginning with uridine. This chain is tRNA-2-methylthio-N(6)-dimethylallyladenosine synthase, found in Methylobacillus flagellatus (strain ATCC 51484 / DSM 6875 / VKM B-1610 / KT).